Reading from the N-terminus, the 85-residue chain is Defensin-like protein 76 (85 aa).

Positions 1-27 (MQNQKHSHILTAITIVLLFAMAAKINA) are cleaved as a signal peptide. Intrachain disulfides connect C35–C70, C40–C59, C44–C68, and C48–C69.

Belongs to the DEFL family.

The protein resides in the secreted. The sequence is that of Defensin-like protein 76 (LCR86) from Arabidopsis thaliana (Mouse-ear cress).